A 264-amino-acid chain; its full sequence is Thymidylate synthase (264 aa).

Residues R21 and 126-127 each bind dUMP; that span reads RR. C146 functions as the Nucleophile in the catalytic mechanism. DUMP is bound by residues 166 to 169, N177, and 207 to 209; these read RSAD and HLY. D169 is a (6R)-5,10-methylene-5,6,7,8-tetrahydrofolate binding site. A (6R)-5,10-methylene-5,6,7,8-tetrahydrofolate-binding site is contributed by A263.

The protein belongs to the thymidylate synthase family. Bacterial-type ThyA subfamily. In terms of assembly, homodimer.

It localises to the cytoplasm. The catalysed reaction is dUMP + (6R)-5,10-methylene-5,6,7,8-tetrahydrofolate = 7,8-dihydrofolate + dTMP. Its pathway is pyrimidine metabolism; dTTP biosynthesis. Functionally, catalyzes the reductive methylation of 2'-deoxyuridine-5'-monophosphate (dUMP) to 2'-deoxythymidine-5'-monophosphate (dTMP) while utilizing 5,10-methylenetetrahydrofolate (mTHF) as the methyl donor and reductant in the reaction, yielding dihydrofolate (DHF) as a by-product. This enzymatic reaction provides an intracellular de novo source of dTMP, an essential precursor for DNA biosynthesis. The polypeptide is Thymidylate synthase (Afipia carboxidovorans (strain ATCC 49405 / DSM 1227 / KCTC 32145 / OM5) (Oligotropha carboxidovorans)).